The sequence spans 145 residues: Large-conductance mechanosensitive channel (145 aa).

2 helical membrane passes run 16 to 36 (VVDL…VTSF) and 83 to 103 (GVFI…FMVI).

Belongs to the MscL family. In terms of assembly, homopentamer.

It localises to the cell inner membrane. In terms of biological role, channel that opens in response to stretch forces in the membrane lipid bilayer. May participate in the regulation of osmotic pressure changes within the cell. The sequence is that of Large-conductance mechanosensitive channel from Geobacter metallireducens (strain ATCC 53774 / DSM 7210 / GS-15).